The following is a 322-amino-acid chain: Arginase-1 (322 aa).

Residue K17 is modified to N6-succinyllysine. Phosphoserine occurs at positions 62 and 72. K75 is modified (N6-succinyllysine). Residues H101, D124, H126, and D128 each coordinate Mn(2+). Substrate-binding positions include 126 to 130 (HTDIN) and 137 to 139 (SGN). S163 bears the Phosphoserine mark. Position 183 (D183) interacts with substrate. S217 carries the phosphoserine modification. Mn(2+) is bound by residues D232 and D234. Substrate is bound by residues T246 and E277.

This sequence belongs to the arginase family. In terms of assembly, homotrimer. Interacts with CMTM6. It depends on Mn(2+) as a cofactor. In terms of tissue distribution, within the immune system initially reported to be selectively expressed in granulocytes (polymorphonuclear leukocytes [PMNs]). Also detected in macrophages mycobacterial granulomas. Expressed in group2 innate lymphoid cells (ILC2s) during lung disease.

It is found in the cytoplasm. Its subcellular location is the cytoplasmic granule. The enzyme catalyses L-arginine + H2O = urea + L-ornithine. It functions in the pathway nitrogen metabolism; urea cycle; L-ornithine and urea from L-arginine: step 1/1. Key element of the urea cycle converting L-arginine to urea and L-ornithine, which is further metabolized into metabolites proline and polyamides that drive collagen synthesis and bioenergetic pathways critical for cell proliferation, respectively; the urea cycle takes place primarily in the liver and, to a lesser extent, in the kidneys. In terms of biological role, functions in L-arginine homeostasis in nonhepatic tissues characterized by the competition between nitric oxide synthase (NOS) and arginase for the available intracellular substrate arginine. Arginine metabolism is a critical regulator of innate and adaptive immune responses. Involved in an antimicrobial effector pathway in polymorphonuclear granulocytes (PMN). Upon PMN cell death is liberated from the phagolysosome and depletes arginine in the microenvironment leading to suppressed T cell and natural killer (NK) cell proliferation and cytokine secretion. In group 2 innate lymphoid cells (ILC2s) promotes acute type 2 inflammation in the lung and is involved in optimal ILC2 proliferation but not survival. In humans, the immunological role in the monocytic/macrophage/dendritic cell (DC) lineage is unsure. In Homo sapiens (Human), this protein is Arginase-1 (ARG1).